Reading from the N-terminus, the 313-residue chain is PDZ domain-containing protein GIPC2 (313 aa).

The segment covering 14-27 has biased composition (basic and acidic residues); that stretch reads KETSRLVEGEHTDA. The interval 14–34 is disordered; that stretch reads KETSRLVEGEHTDAAVRSLPS. The region spanning 117-197 is the PDZ domain; it reads EVNVYKSEDS…EELFTLTLIE (81 aa).

Belongs to the GIPC family. Probably interacts with SEMA5A.

The protein localises to the cytoplasm. This is PDZ domain-containing protein GIPC2 (GIPC2) from Bos taurus (Bovine).